The primary structure comprises 251 residues: Pyrroloquinoline-quinone synthase (251 aa).

This sequence belongs to the PqqC family.

The catalysed reaction is 6-(2-amino-2-carboxyethyl)-7,8-dioxo-1,2,3,4,7,8-hexahydroquinoline-2,4-dicarboxylate + 3 O2 = pyrroloquinoline quinone + 2 H2O2 + 2 H2O + H(+). It functions in the pathway cofactor biosynthesis; pyrroloquinoline quinone biosynthesis. Functionally, ring cyclization and eight-electron oxidation of 3a-(2-amino-2-carboxyethyl)-4,5-dioxo-4,5,6,7,8,9-hexahydroquinoline-7,9-dicarboxylic-acid to PQQ. This is Pyrroloquinoline-quinone synthase from Pseudomonas syringae pv. tomato (strain ATCC BAA-871 / DC3000).